The sequence spans 301 residues: MWFKNLKLYHLTQTLDLTEEDIQDKLAEFPFRPCGSQELATMGWTSPVGQGDMLVHSAGGKFWLTLKKQERILPAAVVNAELADKVALMEAETGSNVGKKAQQEMKEEIIQRLLPQAFTKNSFSHGFISTQDNLVVVDASADGKAETFLAMLRKAIGSLPVVPLAKQSVQEELTHWLTDDSVPNDVVILEEAELRSMEEDGAIVRCKNQDLGSEEIANHLSAGKTVQKIAIEWDETFSALLQEDMAVKRLKFTDVMTEQNDDIPKEDKLAKMDADFALMSAEIVRFSKRLVEIFNLQQDQE.

This sequence belongs to the RdgC family.

It is found in the cytoplasm. It localises to the nucleoid. Its function is as follows. May be involved in recombination. The polypeptide is Recombination-associated protein RdgC (Pseudoalteromonas atlantica (strain T6c / ATCC BAA-1087)).